We begin with the raw amino-acid sequence, 291 residues long: Elongation factor Ts (291 aa).

The interval 79–82 (TDFV) is involved in Mg(2+) ion dislocation from EF-Tu.

Belongs to the EF-Ts family.

The protein localises to the cytoplasm. Associates with the EF-Tu.GDP complex and induces the exchange of GDP to GTP. It remains bound to the aminoacyl-tRNA.EF-Tu.GTP complex up to the GTP hydrolysis stage on the ribosome. This Stenotrophomonas maltophilia (strain K279a) protein is Elongation factor Ts.